The primary structure comprises 259 residues: Aliphatic sulfonates import ATP-binding protein SsuB 1 (259 aa).

The 215-residue stretch at 15–229 (VECRRITRRF…QASTPGFQAL (215 aa)) folds into the ABC transporter domain. Residue 47 to 54 (GSSGSGKT) coordinates ATP.

It belongs to the ABC transporter superfamily. Aliphatic sulfonates importer (TC 3.A.1.17.2) family. In terms of assembly, the complex is composed of two ATP-binding proteins (SsuB), two transmembrane proteins (SsuC) and a solute-binding protein (SsuA).

The protein localises to the cell inner membrane. The catalysed reaction is ATP + H2O + aliphatic sulfonate-[sulfonate-binding protein]Side 1 = ADP + phosphate + aliphatic sulfonateSide 2 + [sulfonate-binding protein]Side 1.. Part of the ABC transporter complex SsuABC involved in aliphatic sulfonates import. Responsible for energy coupling to the transport system. This Pseudomonas fluorescens (strain ATCC BAA-477 / NRRL B-23932 / Pf-5) protein is Aliphatic sulfonates import ATP-binding protein SsuB 1.